A 342-amino-acid polypeptide reads, in one-letter code: MREMITIKPGKITVQANPNMPEEVANLFRKQHYEIVGRHSGVKLCHWLKKSLTEGRFCYKQKFYGIHSHRCLQMTPVLAWCTHNCIFCWRPMETFLGTELPQPWDDPEFIVEESIKAQRKLLIGYKGNPKVDKKKFEEAWEPKHAAISLSGEPMLYPYMGDLVEEFHKRGFTTFIVTNGTVPERLEEMIKEDKLPTQLYVSITAPDIETYNSVNIPMIPDGWERIMRFLELMRDLPTRTVVRLTLVKGENMHSPEKYAKLILKARPMFVEAKAYMFVGYSRNRLTINNMPSHQDIREFAEALVKHLPGYHIEDEYEPSRVVLIMRDDVDPQGTGVNGRFIKH.

Residues Cys-45, Cys-58, Cys-71, Cys-81, Cys-85, and Cys-88 each contribute to the [4Fe-4S] cluster site. The Radical SAM core domain occupies 64–312 (YGIHSHRCLQ…VKHLPGYHIE (249 aa)).

This sequence belongs to the TYW1 family. As to quaternary structure, monomer. The cofactor is [4Fe-4S] cluster.

Its subcellular location is the cytoplasm. The catalysed reaction is N(1)-methylguanosine(37) in tRNA(Phe) + pyruvate + S-adenosyl-L-methionine = 4-demethylwyosine(37) in tRNA(Phe) + 5'-deoxyadenosine + L-methionine + CO2 + H2O. In terms of biological role, component of the wyosine derivatives biosynthesis pathway that catalyzes the condensation of N-methylguanine with 2 carbon atoms from pyruvate to form the tricyclic 4-demethylwyosine (imG-14) on guanosine-37 of tRNA(Phe). In Pyrococcus abyssi (strain GE5 / Orsay), this protein is S-adenosyl-L-methionine-dependent tRNA 4-demethylwyosine synthase.